Here is a 274-residue protein sequence, read N- to C-terminus: Dermonecrotic toxin SdSicTox-betaIIB1bviii (274 aa).

Residue histidine 5 is part of the active site. Mg(2+) contacts are provided by glutamate 25 and aspartate 27. Histidine 41 acts as the Nucleophile in catalysis. 2 disulfides stabilise this stretch: cysteine 45-cysteine 51 and cysteine 47-cysteine 190. Aspartate 85 lines the Mg(2+) pocket.

The protein belongs to the arthropod phospholipase D family. Class II subfamily. Mg(2+) serves as cofactor. Expressed by the venom gland.

Its subcellular location is the secreted. It carries out the reaction an N-(acyl)-sphingosylphosphocholine = an N-(acyl)-sphingosyl-1,3-cyclic phosphate + choline. The enzyme catalyses an N-(acyl)-sphingosylphosphoethanolamine = an N-(acyl)-sphingosyl-1,3-cyclic phosphate + ethanolamine. The catalysed reaction is a 1-acyl-sn-glycero-3-phosphocholine = a 1-acyl-sn-glycero-2,3-cyclic phosphate + choline. It catalyses the reaction a 1-acyl-sn-glycero-3-phosphoethanolamine = a 1-acyl-sn-glycero-2,3-cyclic phosphate + ethanolamine. In terms of biological role, dermonecrotic toxins cleave the phosphodiester linkage between the phosphate and headgroup of certain phospholipids (sphingolipid and lysolipid substrates), forming an alcohol (often choline) and a cyclic phosphate. This toxin acts on sphingomyelin (SM). It may also act on ceramide phosphoethanolamine (CPE), lysophosphatidylcholine (LPC) and lysophosphatidylethanolamine (LPE), but not on lysophosphatidylserine (LPS), and lysophosphatidylglycerol (LPG). It acts by transphosphatidylation, releasing exclusively cyclic phosphate products as second products. Induces dermonecrosis, hemolysis, increased vascular permeability, edema, inflammatory response, and platelet aggregation. The sequence is that of Dermonecrotic toxin SdSicTox-betaIIB1bviii from Sicarius cf. damarensis (strain GJB-2008) (Six-eyed sand spider).